The chain runs to 208 residues: Small ribosomal subunit protein uS4 (208 aa).

The 69-residue stretch at 98–166 (SRLDNVVYRM…VKEAIEASRN (69 aa)) folds into the S4 RNA-binding domain.

This sequence belongs to the universal ribosomal protein uS4 family. As to quaternary structure, part of the 30S ribosomal subunit. Contacts protein S5. The interaction surface between S4 and S5 is involved in control of translational fidelity.

One of the primary rRNA binding proteins, it binds directly to 16S rRNA where it nucleates assembly of the body of the 30S subunit. Its function is as follows. With S5 and S12 plays an important role in translational accuracy. This Kosmotoga olearia (strain ATCC BAA-1733 / DSM 21960 / TBF 19.5.1) protein is Small ribosomal subunit protein uS4.